The chain runs to 209 residues: MPGAIVEEEKSQIESIKEQLKLEKEDDVVVEDVKDGEEEDDDEDDEDVEVEGEGGNENAKQSRSEKKSRKAVLKLGMKPVSDVSRVTIKRAKNVLFVISKPDVYKSPNAETYVIFGEAKVDDLSSQLQTQAAQRFKMPDVTSMLPNAGSEATMAPLAEEEDEDDVDDTGVEARDIDLVMTQAGVSKAKAVSALKANDGDIVSAIMELTT.

Positions 23 to 71 (EKEDDVVVEDVKDGEEEDDDEDDEDVEVEGEGGNENAKQSRSEKKSRKA) are disordered. Over residues 25 to 54 (EDDVVVEDVKDGEEEDDDEDDEDVEVEGEG) the composition is skewed to acidic residues. The NAC-A/B domain occupies 62–127 (SRSEKKSRKA…AKVDDLSSQL (66 aa)). The region spanning 170 to 207 (VEARDIDLVMTQAGVSKAKAVSALKANDGDIVSAIMEL) is the UBA domain.

This sequence belongs to the NAC-alpha family.

Its function is as follows. May promote appropriate targeting of ribosome-nascent polypeptide complexes. This chain is Nascent polypeptide-associated complex subunit alpha-like protein 5, found in Arabidopsis thaliana (Mouse-ear cress).